A 309-amino-acid chain; its full sequence is 1,2-phenylacetyl-CoA epoxidase, subunit A (309 aa).

Substrate is bound by residues Arg33, Gln37, 103 to 106 (KYSS), Asn132, Met193, 202 to 204 (SPN), Lys214, and Asn218.

Forms a stable heterotetramer (dimer of heterodimers) with PaaC. Requires Fe cation as cofactor.

The enzyme catalyses phenylacetyl-CoA + NADPH + O2 + H(+) = 2-(1,2-epoxy-1,2-dihydrophenyl)acetyl-CoA + NADP(+) + H2O. The protein operates within aromatic compound metabolism; phenylacetate degradation. Functionally, component of 1,2-phenylacetyl-CoA epoxidase multicomponent enzyme system which catalyzes the reduction of phenylacetyl-CoA (PA-CoA) to form 1,2-epoxyphenylacetyl-CoA. The subunit A is the catalytic subunit involved in the incorporation of one atom of molecular oxygen into phenylacetyl-CoA. In Escherichia coli (strain K12), this protein is 1,2-phenylacetyl-CoA epoxidase, subunit A (paaA).